Reading from the N-terminus, the 236-residue chain is HTH-type transcriptional regulator SACE_5812 (236 aa).

The 61-residue stretch at 30 to 90 (LLTQDKIVSA…LALDAVFGEV (61 aa)) folds into the HTH tetR-type domain. The H-T-H motif DNA-binding region spans 53–72 (SMRKLADRLQAHATSLYWHV).

In terms of biological role, transcriptional regulator that inhibits erythromycin production. Directly represses the expression of SACE_5813, eryAI (encoding polyketide synthase I) and ermE (encoding rRNA methyltransferase), suggesting its direct regulation of the erythromycin biosynthesis gene cluster. May play an important role in regulating secondary metabolism in actinomycetes. This chain is HTH-type transcriptional regulator SACE_5812, found in Saccharopolyspora erythraea (strain ATCC 11635 / DSM 40517 / JCM 4748 / NBRC 13426 / NCIMB 8594 / NRRL 2338).